A 176-amino-acid polypeptide reads, in one-letter code: MSSNQQPVVVGKIGSTYGVKGWMKITAYTDSVEGIFDYSPWFLKEHGEWREVKVSQWRFHGKAVVAELEGVSNREQAQMLTNCEIGILAEQMPELPEDEFYWRDLIGCEVLNTKGYNLGKVDQILETGSNDVLMVKANAKDAFGKTERMIPYLPDQFVLEVKLSEKQIIVDWDPDF.

The PRC barrel domain maps to 97 to 176 (EDEFYWRDLI…QIIVDWDPDF (80 aa)).

Belongs to the RimM family. Binds ribosomal protein uS19.

Its subcellular location is the cytoplasm. Functionally, an accessory protein needed during the final step in the assembly of 30S ribosomal subunit, possibly for assembly of the head region. Essential for efficient processing of 16S rRNA. May be needed both before and after RbfA during the maturation of 16S rRNA. It has affinity for free ribosomal 30S subunits but not for 70S ribosomes. The protein is Ribosome maturation factor RimM of Shewanella amazonensis (strain ATCC BAA-1098 / SB2B).